Reading from the N-terminus, the 264-residue chain is 3-methyl-2-oxobutanoate hydroxymethyltransferase (264 aa).

The Mg(2+) site is built by Asp45 and Asp84. 3-methyl-2-oxobutanoate is bound by residues 45–46 (DS), Asp84, and Lys112. Position 114 (Glu114) interacts with Mg(2+). Glu181 (proton acceptor) is an active-site residue.

It belongs to the PanB family. In terms of assembly, homodecamer; pentamer of dimers. The cofactor is Mg(2+).

It is found in the cytoplasm. It catalyses the reaction 3-methyl-2-oxobutanoate + (6R)-5,10-methylene-5,6,7,8-tetrahydrofolate + H2O = 2-dehydropantoate + (6S)-5,6,7,8-tetrahydrofolate. The protein operates within cofactor biosynthesis; (R)-pantothenate biosynthesis; (R)-pantoate from 3-methyl-2-oxobutanoate: step 1/2. Functionally, catalyzes the reversible reaction in which hydroxymethyl group from 5,10-methylenetetrahydrofolate is transferred onto alpha-ketoisovalerate to form ketopantoate. The sequence is that of 3-methyl-2-oxobutanoate hydroxymethyltransferase from Escherichia coli O127:H6 (strain E2348/69 / EPEC).